The sequence spans 529 residues: Bifunctional purine biosynthesis protein PurH (529 aa).

One can recognise an MGS-like domain in the interval 2-149 (TDLVPLRRAL…KNHSFVTVLT (148 aa)).

This sequence belongs to the PurH family.

The enzyme catalyses (6R)-10-formyltetrahydrofolate + 5-amino-1-(5-phospho-beta-D-ribosyl)imidazole-4-carboxamide = 5-formamido-1-(5-phospho-D-ribosyl)imidazole-4-carboxamide + (6S)-5,6,7,8-tetrahydrofolate. It catalyses the reaction IMP + H2O = 5-formamido-1-(5-phospho-D-ribosyl)imidazole-4-carboxamide. It participates in purine metabolism; IMP biosynthesis via de novo pathway; 5-formamido-1-(5-phospho-D-ribosyl)imidazole-4-carboxamide from 5-amino-1-(5-phospho-D-ribosyl)imidazole-4-carboxamide (10-formyl THF route): step 1/1. The protein operates within purine metabolism; IMP biosynthesis via de novo pathway; IMP from 5-formamido-1-(5-phospho-D-ribosyl)imidazole-4-carboxamide: step 1/1. This Dinoroseobacter shibae (strain DSM 16493 / NCIMB 14021 / DFL 12) protein is Bifunctional purine biosynthesis protein PurH.